Consider the following 708-residue polypeptide: E3 ubiquitin-protein ligase Praja-2 (708 aa).

Basic and acidic residues predominate over residues 1-10; sequence MSQYTEKEPA. Disordered regions lie at residues 1 to 30 and 53 to 90; these read MSQY…GYQT and ERSL…SSLP. The residue at position 2 (Ser2) is an N-acetylserine. Polar residues predominate over residues 74–90; the sequence is ENSSGSSPLDQVDSSLP. The residue at position 196 (Ser196) is a Phosphoserine. 3 disordered regions span residues 244–342, 385–411, and 425–495; these read GDTE…KQRS, TQRE…DNPF, and DEDS…QTSL. A Phosphothreonine modification is found at Thr246. Residues 249–276 show a composition bias toward polar residues; sequence VHQNSQEIQRSSQDEMVSTKQQNNTSQE. 3 positions are modified to phosphoserine: Ser253, Ser309, and Ser323. A compositionally biased stretch (polar residues) spans 322 to 332; that stretch reads ISSSQVDQETG. Basic and acidic residues predominate over residues 333–342; sequence FNRHEAKQRS. Ser342 bears the Phosphoserine; by PKA mark. A Phosphothreonine; by PKA modification is found at Thr389. Ser432 is modified (phosphoserine). Positions 467–483 are enriched in acidic residues; sequence NEPELQSDSSGPEEENQ. Positions 484 to 493 are enriched in polar residues; that stretch reads ELSLQEGEQT. The interaction with PRKAR1A, PRKAR2A and PRKAR2B stretch occupies residues 531–708; sequence DGNNNLEDDS…PSNDSIAEAP (178 aa). Residues 550-570 are mediates interaction with TBC1D31; the sequence is WSLFDGFADGLGVAEAISYVD. The RING-type; atypical zinc finger occupies 634 to 675; that stretch reads CPICCSEYIKDDIATELPCHHFFHKPCVSIWLQKSGTCPVCR. Positions 685-708 are disordered; it reads ASAAPSSEPDPDAPPSNDSIAEAP. Over residues 699 to 708 the composition is skewed to low complexity; it reads PSNDSIAEAP.

Binds ubiquitin-conjugating enzymes (E2s). In vitro, interacts with the ubiquitin-conjugating enzyme, UBE2D2. The phosphorylated form interacts with PRKAR1A, PRKAR2A and PRKAR2B. Binds the catalytic subunits of cAMP-dependent protein kinase. Interacts with MFHAS1. Interacts with TBC1D31; the interaction is direct and recruits PJA2 to centrosomes.

It localises to the cytoplasm. The protein localises to the cell membrane. The protein resides in the endoplasmic reticulum membrane. Its subcellular location is the golgi apparatus membrane. It is found in the synapse. It localises to the postsynaptic density. The protein localises to the cytoskeleton. The protein resides in the microtubule organizing center. Its subcellular location is the centrosome. It carries out the reaction S-ubiquitinyl-[E2 ubiquitin-conjugating enzyme]-L-cysteine + [acceptor protein]-L-lysine = [E2 ubiquitin-conjugating enzyme]-L-cysteine + N(6)-ubiquitinyl-[acceptor protein]-L-lysine.. It functions in the pathway protein modification; protein ubiquitination. Its function is as follows. Has E2-dependent E3 ubiquitin-protein ligase activity. Responsible for ubiquitination of cAMP-dependent protein kinase type I and type II-alpha/beta regulatory subunits and for targeting them for proteasomal degradation. Essential for PKA-mediated long-term memory processes. Through the ubiquitination of MFHAS1, positively regulates the TLR2 signaling pathway that leads to the activation of the downstream p38 and JNK MAP kinases and promotes the polarization of macrophages toward the pro-inflammatory M1 phenotype. Plays a role in ciliogenesis by ubiquitinating OFD1. The chain is E3 ubiquitin-protein ligase Praja-2 (PJA2) from Pongo abelii (Sumatran orangutan).